The following is a 503-amino-acid chain: Proton-coupled zinc antiporter SLC30A1 (503 aa).

Over 1–10 the chain is Cytoplasmic; the sequence is MGCWGRNRGR. A helical transmembrane segment spans residues 11–31; it reads LLCMLLLTFMFMVLEVVVSRV. Residues 32–35 lie on the Extracellular side of the membrane; it reads TASL. The helical transmembrane segment at 36 to 56 threads the bilayer; it reads AMLSDSFHMLSDVLALVVALV. Positions 43 and 47 each coordinate Zn(2+). Topologically, residues 57–78 are cytoplasmic; the sequence is AERFARRTHATQKNTFGWIRAE. A helical transmembrane segment spans residues 79–99; sequence VMGALVNAIFLTGLCFAILLE. Residues 100–113 lie on the Extracellular side of the membrane; that stretch reads AVERFIEPHEMQQP. A helical transmembrane segment spans residues 114–134; the sequence is LVVLSVGVAGLLVNVLGLCLF. Residues 135–243 lie on the Cytoplasmic side of the membrane; that stretch reads HHHSGEGQGA…RAGQLNMRGV (109 aa). The disordered stretch occupies residues 140–213; it reads EGQGAGHGHS…PEKLRSDDPV (74 aa). Residues 145-156 are 6 X 2 AA approximate repeats of H-G; the sequence is GHGHSHGHGHGH. Residues 147–165 show a composition bias toward basic residues; it reads GHSHGHGHGHLAKGARKAG. The span at 184 to 196 shows a compositional bias: polar residues; it reads TNTLVANTSNSNG. The span at 200 to 211 shows a compositional bias: basic and acidic residues; sequence DQAEPEKLRSDD. The chain crosses the membrane as a helical span at residues 244 to 264; the sequence is FLHVLGDALGSVIVVVNALVF. Residues His-246 and Asp-250 each coordinate Zn(2+). Over 265-303 the chain is Extracellular; sequence YFNWKGCTEDDFCTNPCFPDPCKSSVEIINSTQAPMRDA. An N-linked (GlcNAc...) asparagine glycan is attached at Asn-294. The chain crosses the membrane as a helical span at residues 304-324; the sequence is GPCWVLYLDPTLCIIMVCILL. At 325–503 the chain is on the cytoplasmic side; it reads YTTYPLLKES…VPNKQPESSL (179 aa). Ser-502 carries the phosphoserine modification.

It belongs to the cation diffusion facilitator (CDF) transporter (TC 2.A.4) family. SLC30A subfamily. Homodimer. Interacts with TMEM163. Interacts and forms a complex with TMC6 and TMC8; the interaction regulates zinc transport into the ER. In terms of tissue distribution, widely expressed.

The protein resides in the cell membrane. Its subcellular location is the basolateral cell membrane. It is found in the cytoplasmic vesicle membrane. The protein localises to the cytoplasm. It localises to the endoplasmic reticulum membrane. The protein resides in the golgi apparatus membrane. Its subcellular location is the nucleus membrane. It catalyses the reaction Zn(2+)(in) + 2 H(+)(out) = Zn(2+)(out) + 2 H(+)(in). In terms of biological role, zinc ion:proton antiporter that could function at the plasma membrane mediating zinc efflux from cells against its electrochemical gradient protecting them from intracellular zinc accumulation and toxicity. Alternatively, could prevent the transport to the plasma membrane of CACNB2, the L-type calcium channels regulatory subunit, through a yet to be defined mechanism. By modulating the expression of these channels at the plasma membrane, could prevent calcium and zinc influx into cells. By the same mechanism, could also prevent L-type calcium channels-mediated heavy metal influx into cells. In some cells, could also function as a zinc ion:proton antiporter mediating zinc entry into the lumen of cytoplasmic vesicles. In macrophages, can increase zinc ions concentration into the lumen of cytoplasmic vesicles containing engulfed bacteria and could help inactivate them. Forms a complex with TMC6/EVER1 and TMC8/EVER2 at the ER membrane of keratynocytes which facilitates zinc uptake into the ER. Down-regulates the activity of transcription factors induced by zinc and cytokines. In Mus musculus (Mouse), this protein is Proton-coupled zinc antiporter SLC30A1.